A 232-amino-acid chain; its full sequence is 7-cyano-7-deazaguanine synthase (232 aa).

8 to 18 contributes to the ATP binding site; sequence FSGGQDSTTCL. Positions 187, 196, 199, and 202 each coordinate Zn(2+).

The protein belongs to the QueC family. The cofactor is Zn(2+).

It carries out the reaction 7-carboxy-7-deazaguanine + NH4(+) + ATP = 7-cyano-7-deazaguanine + ADP + phosphate + H2O + H(+). It participates in purine metabolism; 7-cyano-7-deazaguanine biosynthesis. Its function is as follows. Catalyzes the ATP-dependent conversion of 7-carboxy-7-deazaguanine (CDG) to 7-cyano-7-deazaguanine (preQ(0)). This is 7-cyano-7-deazaguanine synthase from Photobacterium profundum (strain SS9).